Reading from the N-terminus, the 68-residue chain is Large ribosomal subunit protein uL29 (68 aa).

This sequence belongs to the universal ribosomal protein uL29 family.

The chain is Large ribosomal subunit protein uL29 from Parvibaculum lavamentivorans (strain DS-1 / DSM 13023 / NCIMB 13966).